Consider the following 127-residue polypeptide: Cold-regulated protein 1 (127 aa).

A disordered region spans residues 39-127 (ARGPPPSPAP…WTRPRMARAR (89 aa)). Residues 85 to 101 (SRRRRRRRATRRARSRM) show a composition bias toward basic residues. A compositionally biased stretch (low complexity) spans 102–121 (PRTTPWRAPRAPARAWWTRP).

The chain is Cold-regulated protein 1 from Hordeum vulgare (Barley).